The following is a 282-amino-acid chain: ATP synthase gamma chain (282 aa).

This sequence belongs to the ATPase gamma chain family. As to quaternary structure, F-type ATPases have 2 components, CF(1) - the catalytic core - and CF(0) - the membrane proton channel. CF(1) has five subunits: alpha(3), beta(3), gamma(1), delta(1), epsilon(1). CF(0) has three main subunits: a, b and c.

The protein resides in the cell membrane. Functionally, produces ATP from ADP in the presence of a proton gradient across the membrane. The gamma chain is believed to be important in regulating ATPase activity and the flow of protons through the CF(0) complex. This is ATP synthase gamma chain from Clostridium botulinum (strain Okra / Type B1).